A 932-amino-acid polypeptide reads, in one-letter code: UPF0182 protein Dred_1797 (932 aa).

7 consecutive transmembrane segments (helical) span residues 11–31 (LVIL…GLYI), 53–73 (IGLR…NLML), 118–138 (LTLA…SSVA), 180–200 (ILAS…LVTD), 209–229 (IFRF…FFVI), 264–284 (YKAL…NIFL), and 292–312 (YAIG…PAII). A disordered region spans residues 861–883 (DRPQQGVPPATDQPAGQQPAPEK).

The protein belongs to the UPF0182 family.

Its subcellular location is the cell membrane. The polypeptide is UPF0182 protein Dred_1797 (Desulforamulus reducens (strain ATCC BAA-1160 / DSM 100696 / MI-1) (Desulfotomaculum reducens)).